Here is a 248-residue protein sequence, read N- to C-terminus: PF03932 family protein CutC (248 aa).

The protein belongs to the CutC family. In terms of assembly, homodimer.

Its subcellular location is the cytoplasm. This is PF03932 family protein CutC from Escherichia coli O9:H4 (strain HS).